Reading from the N-terminus, the 150-residue chain is Protein-export protein SecB (150 aa).

The protein belongs to the SecB family. In terms of assembly, homotetramer, a dimer of dimers. One homotetramer interacts with 1 SecA dimer.

The protein resides in the cytoplasm. One of the proteins required for the normal export of preproteins out of the cell cytoplasm. It is a molecular chaperone that binds to a subset of precursor proteins, maintaining them in a translocation-competent state. It also specifically binds to its receptor SecA. The chain is Protein-export protein SecB from Acidovorax ebreus (strain TPSY) (Diaphorobacter sp. (strain TPSY)).